The sequence spans 155 residues: Protein FAM162A (155 aa).

The required for proapoptotic activity stretch occupies residues Arg77–Lys103. A helical transmembrane segment spans residues Val102–Ile121.

This sequence belongs to the UPF0389 family. Interacts with HSP90AB1; HSP90AB1 is essential for FAM162A mitochondrial localization and pro-apoptotic activity. Interacts with VDAC2; the interaction is probably involved in inducing mitochondrial permeability transition.

It localises to the mitochondrion membrane. In terms of biological role, proposed to be involved in regulation of apoptosis; the exact mechanism may differ between cell types/tissues. May be involved in hypoxia-induced cell death of transformed cells implicating cytochrome C release and caspase activation (such as CASP9) and inducing mitochondrial permeability transition. May be involved in hypoxia-induced cell death of neuronal cells probably by promoting release of AIFM1 from mitochondria to cytoplasm and its translocation to the nucleus; however, the involvement of caspases has been reported conflictingly. The chain is Protein FAM162A (Fam162a) from Rattus norvegicus (Rat).